Consider the following 218-residue polypeptide: Enhancer of split M2 protein (218 aa).

Residues 1 to 25 (MYLDTKNLTASSTSALTAATASNSK) are compositionally biased toward low complexity. Disordered regions lie at residues 1-30 (MYLD…TRRM), 64-86 (NTQQ…KSTP), and 137-164 (GRNC…SSSA). The segment covering 147-163 (SSNINSSSSSSNMNSSS) has biased composition (low complexity).

In terms of biological role, part of the Notch signaling pathway. This Drosophila melanogaster (Fruit fly) protein is Enhancer of split M2 protein.